The sequence spans 338 residues: Lipoate-protein ligase A (338 aa).

The BPL/LPL catalytic domain maps to P29–V216. Residues R71, G76–F79, and K134 contribute to the ATP site. Position 134 (K134) interacts with (R)-lipoate.

The protein belongs to the LplA family. As to quaternary structure, monomer.

It localises to the cytoplasm. It carries out the reaction L-lysyl-[lipoyl-carrier protein] + (R)-lipoate + ATP = N(6)-[(R)-lipoyl]-L-lysyl-[lipoyl-carrier protein] + AMP + diphosphate + H(+). Its pathway is protein modification; protein lipoylation via exogenous pathway; protein N(6)-(lipoyl)lysine from lipoate: step 1/2. It functions in the pathway protein modification; protein lipoylation via exogenous pathway; protein N(6)-(lipoyl)lysine from lipoate: step 2/2. Catalyzes both the ATP-dependent activation of exogenously supplied lipoate to lipoyl-AMP and the transfer of the activated lipoyl onto the lipoyl domains of lipoate-dependent enzymes. This is Lipoate-protein ligase A from Klebsiella pneumoniae (strain 342).